Reading from the N-terminus, the 358-residue chain is N-acylethanolamine-hydrolyzing acid amidase (358 aa).

The N-terminal stretch at 1 to 26 is a signal peptide; the sequence is MQGTGHPVRPVLELLLLLLLLAGVGG. N-linked (GlcNAc...) asparagine glycans are attached at residues N39 and N108. Residue C127 is the Nucleophile of the active site. Residues N310, N334, and N356 are each glycosylated (N-linked (GlcNAc...) asparagine).

It belongs to the acid ceramidase family. As to quaternary structure, heterodimer of an alpha and a beta subunit, produced by autocatalytic cleavage. N-glycosylated. Tunicamycin treatment causes a reduction in specific activity against N-palmitoylethanolamine. In terms of processing, autoproteolytic cleavage at pH 4.5 gives rise to the alpha and beta subunit. Cleavage gives rise to a conformation change that activates the enzyme. The same catalytic Cys residue mediates the autoproteolytic cleavage and subsequent hydrolysis of lipid substrates.

It localises to the lysosome. The protein resides in the membrane. It catalyses the reaction N-hexadecanoylethanolamine + H2O = ethanolamine + hexadecanoate. It carries out the reaction an N-(long-chain fatty acyl)ethanolamine + H2O = a long-chain fatty acid + ethanolamine. The enzyme catalyses N-dodecanoylethanolamine + H2O = dodecanoate + ethanolamine. The catalysed reaction is N-tetradecanoylethanolamine + H2O = tetradecanoate + ethanolamine. It catalyses the reaction an N-acylsphing-4-enine + H2O = sphing-4-enine + a fatty acid. It carries out the reaction N-hexadecanoylsphing-4-enine + H2O = sphing-4-enine + hexadecanoate. The enzyme catalyses N-dodecanoylsphing-4-enine + H2O = dodecanoate + sphing-4-enine. It participates in lipid metabolism; fatty acid metabolism. Degrades bioactive fatty acid amides to their corresponding acids, with the following preference: N-palmitoylethanolamine &gt; N-myristoylethanolamine &gt; N-stearoylethanolamine &gt; N-oleoylethanolamine &gt; N-linoleoylethanolamine &gt; N-arachidonoylethanolamine. This chain is N-acylethanolamine-hydrolyzing acid amidase, found in Oryctolagus cuniculus (Rabbit).